We begin with the raw amino-acid sequence, 89 residues long: Alpha-ketoglutarate dehydrogenase subunit 4, mitochondrial (89 aa).

This sequence belongs to the alpha-ketoglutarate dehydrogenase component 4 family. In terms of assembly, component of the 2-oxoglutarate dehydrogenase complex (OGDC), also called alpha-ketoglutarate dehydrogenase (KGDH) complex. The copmplex is composed of the catalytic subunits OGDH (2-oxoglutarate dehydrogenase kgd1; also called E1 subunit), DLST (dihydrolipoamide succinyltransferase kgd2; also called E2 subunit) and DLD (dihydrolipoamide dehydrogenase dld1; also called E3 subunit), and the assembly factor KGD4. Within OGDC, interacts (via N-terminus) with E3 subunit and (via C-terminus) with the complex core formed by E1 and E2 subunits.

Its subcellular location is the mitochondrion. Its function is as follows. Molecular adapter that is necessary to a form a stable 2-oxoglutarate dehydrogenase enzyme complex (OGDC). Required for incorporation of the E3 subunit (dld1) into the E1-E2 core (kgd1-kgd2) of mitochondrial OGDC, and acting as a stability factor for the fully assembled complex. This chain is Alpha-ketoglutarate dehydrogenase subunit 4, mitochondrial (kgd4), found in Schizosaccharomyces pombe (strain 972 / ATCC 24843) (Fission yeast).